Here is a 290-residue protein sequence, read N- to C-terminus: Forkhead box protein O3B (290 aa).

Disordered stretches follow at residues 1–30 (METD…TEEG) and 44–239 (AAAA…SSRR). Low complexity-rich tracts occupy residues 44 to 59 (AAAA…RGVH) and 75 to 91 (RTPA…EAPA). The residue at position 117 (Thr117) is a Phosphothreonine; by PKB/AKT1. The segment covering 142 to 153 (IPEEEDDEDDED) has biased composition (acidic residues). Residues 242 to 290 (WGNLSYADLITRAIESSPDRRLTLSQIYEWMVSCVPYFKDKGNSNSSAG) constitute a DNA-binding region (fork-head).

It localises to the cytoplasm. It is found in the cytosol. Its function is as follows. Transcription factor. The chain is Forkhead box protein O3B from Homo sapiens (Human).